We begin with the raw amino-acid sequence, 566 residues long: Peroxisomal targeting signal receptor (566 aa).

A Glycyl cysteine thioester (Cys-Gly) (interchain with G-Cter in ubiquitin) cross-link involves residue C5. The amphipathic helix 1 (AH1) stretch occupies residues 6–28 (SVGSNPLAQLNKHAQQNPALRQV). K17 is covalently cross-linked (Glycyl lysine isopeptide (Lys-Gly) (interchain with G-Cter in ubiquitin)). An amphipathic helix 2 (AH2) region spans residues 53-71 (RFQMDQFMNRSPGFSDGQL). Positions 88–159 (GLKKQDSGSS…IGRPMMHTGI (72 aa)) are disordered. Positions 94 to 142 (SGSSNMSAGDTAQHSRSWGNEFNSRSPQQGLASRVNNVERISNTNSMSS) are enriched in polar residues. The WxxxF/Y motif 1 signature appears at 111–115 (WGNEF). The amphipathic helix 3 (AH3) stretch occupies residues 145 to 151 (PGMSRIG). The WxxxF/Y motif 2 signature appears at 187-191 (WNEQF). The segment at 225-241 (FQEVWDKLQAETADNNL) is amphipathic helix 4 (AH4). The WxxxF/Y motif 3 signature appears at 248-252 (WEKDY). 5 TPR repeats span residues 277-311 (NPNA…DPAH), 312-345 (VDAW…DPTN), 416-449 (PEVQ…NPND), 451-483 (LMWN…KPSF), and 485-517 (RARY…HEVE).

It belongs to the peroxisomal targeting signal receptor family. As to quaternary structure, interacts (via WxxxF/Y and LVxEF motifs) with PEX14; promoting translocation through the PEX13-PEX14 docking complex. In terms of processing, monoubiquitinated at Cys-5 by PEX2 during PEX5 passage through the retrotranslocation channel: monoubiquitination acts as a signal for PEX5 extraction and is required for proper export from peroxisomes and recycling. When PEX5 recycling is compromised, polyubiquitinated at Lys-17 by PEX10 during its passage through the retrotranslocation channel, leading to its degradation.

Its subcellular location is the cytoplasm. It is found in the cytosol. It localises to the peroxisome matrix. Receptor that mediates peroxisomal import of proteins containing a C-terminal PTS1-type tripeptide peroxisomal targeting signal (SKL-type). Binds to cargo proteins containing a PTS1 peroxisomal targeting signal in the cytosol, and translocates them into the peroxisome matrix by passing through the PEX13-PEX14 docking complex along with cargo proteins. PEX5 receptor is then retrotranslocated into the cytosol, leading to release of bound cargo in the peroxisome matrix, and reset for a subsequent peroxisome import cycle. The polypeptide is Peroxisomal targeting signal receptor (PEX5) (Kluyveromyces lactis (strain ATCC 8585 / CBS 2359 / DSM 70799 / NBRC 1267 / NRRL Y-1140 / WM37) (Yeast)).